Here is a 3305-residue protein sequence, read N- to C-terminus: Microtubule-actin cross-linking factor 1, isoforms 6/7 (3305 aa).

7 disordered regions span residues 1–24 (MGKPLSRPDCLRRNPTCLGKGEDE), 108–140 (VQKSAPVPPRRRPNAERKDNVNRRSWKSFMPPN), 152–202 (LSEV…KSVD), 239–272 (AAASGNTDEMQEHRFSSATWPRAMKSSSKGGFSE), 333–381 (EEWE…VAVS), 941–1007 (EPAI…PEWS), and 2865–2896 (SVEPTHAPFMEKSRSGSRKSLNQPTPPPMPIL). Basic and acidic residues predominate over residues 120 to 129 (PNAERKDNVN). EF-hand domains are found at residues 2958–2993 (HKKSRVMDFFRRIDKDQDGKITRQEFIDGILASKFP) and 2994–3029 (TTKLEMTAVADIFDRDGDGYIDYYEFVAALHPNKDA). 10 residues coordinate Ca(2+): Asp-2971, Asp-2973, Asp-2975, Lys-2977, Glu-2982, Asp-3007, Asp-3009, Asp-3011, Tyr-3013, and Glu-3018. Residues 3034 to 3106 (TDADKIEDEV…EFLVKNDPCR (73 aa)) form the GAR domain. The disordered stretch occupies residues 3122–3305 (PEGASQGMTP…ASPRTPGPKR (184 aa)). Residues 3142–3176 (SSRAASPTRSSSSASQSNHSCTSMPSSPATPASGT) are compositionally biased toward low complexity. The segment covering 3193-3212 (FHSSRTSLAGDTSNSSSPAS) has biased composition (polar residues). Residues 3227 to 3241 (SRPGSRAGSRAGSRA) are compositionally biased toward low complexity. Residues 3256–3266 (ETQSACSDTSE) are compositionally biased toward polar residues. The span at 3267–3278 (SSAAGGQGSSRR) shows a compositional bias: low complexity.

It localises to the cytoplasm. Its subcellular location is the cytoskeleton. This chain is Microtubule-actin cross-linking factor 1, isoforms 6/7, found in Mus musculus (Mouse).